A 314-amino-acid polypeptide reads, in one-letter code: Methionyl-tRNA formyltransferase (314 aa).

Residue 112–115 (SLLP) coordinates (6S)-5,6,7,8-tetrahydrofolate.

Belongs to the Fmt family.

The catalysed reaction is L-methionyl-tRNA(fMet) + (6R)-10-formyltetrahydrofolate = N-formyl-L-methionyl-tRNA(fMet) + (6S)-5,6,7,8-tetrahydrofolate + H(+). Its function is as follows. Attaches a formyl group to the free amino group of methionyl-tRNA(fMet). The formyl group appears to play a dual role in the initiator identity of N-formylmethionyl-tRNA by promoting its recognition by IF2 and preventing the misappropriation of this tRNA by the elongation apparatus. This is Methionyl-tRNA formyltransferase from Tolumonas auensis (strain DSM 9187 / NBRC 110442 / TA 4).